The sequence spans 399 residues: Formate-dependent phosphoribosylglycinamide formyltransferase (399 aa).

Residues 22 to 23 (EL) and glutamate 82 each bind N(1)-(5-phospho-beta-D-ribosyl)glycinamide. ATP contacts are provided by residues arginine 115, lysine 157, 162–167 (SSGKGQ), 197–200 (EAVV), and glutamate 205. The ATP-grasp domain occupies 120 to 315 (RLAAEELGLQ…EFELHARAIL (196 aa)). Residues glutamate 274 and glutamate 286 each contribute to the Mg(2+) site. N(1)-(5-phospho-beta-D-ribosyl)glycinamide contacts are provided by residues aspartate 293, lysine 362, and 369 to 370 (RR).

This sequence belongs to the PurK/PurT family. In terms of assembly, homodimer.

It carries out the reaction N(1)-(5-phospho-beta-D-ribosyl)glycinamide + formate + ATP = N(2)-formyl-N(1)-(5-phospho-beta-D-ribosyl)glycinamide + ADP + phosphate + H(+). The protein operates within purine metabolism; IMP biosynthesis via de novo pathway; N(2)-formyl-N(1)-(5-phospho-D-ribosyl)glycinamide from N(1)-(5-phospho-D-ribosyl)glycinamide (formate route): step 1/1. Involved in the de novo purine biosynthesis. Catalyzes the transfer of formate to 5-phospho-ribosyl-glycinamide (GAR), producing 5-phospho-ribosyl-N-formylglycinamide (FGAR). Formate is provided by PurU via hydrolysis of 10-formyl-tetrahydrofolate. The chain is Formate-dependent phosphoribosylglycinamide formyltransferase from Thioalkalivibrio sulfidiphilus (strain HL-EbGR7).